A 342-amino-acid polypeptide reads, in one-letter code: Ferredoxin--NADP reductase (342 aa).

Residues C17, D36, Q44, Y49, V89, F124, D289, and T330 each coordinate FAD.

Belongs to the ferredoxin--NADP reductase type 2 family. As to quaternary structure, homodimer. It depends on FAD as a cofactor.

The catalysed reaction is 2 reduced [2Fe-2S]-[ferredoxin] + NADP(+) + H(+) = 2 oxidized [2Fe-2S]-[ferredoxin] + NADPH. This is Ferredoxin--NADP reductase from Nitrobacter hamburgensis (strain DSM 10229 / NCIMB 13809 / X14).